An 822-amino-acid chain; its full sequence is Putative endoplasmic reticulum metallopeptidase 1 (822 aa).

The Cytoplasmic portion of the chain corresponds to 1 to 14 (MVLVCASSSKCKRN). The chain crosses the membrane as a helical span at residues 15-35 (TFLQLAMVLFAVVMARIALYF). The Lumenal segment spans residues 36-365 (HNHLDEPLVD…FNSLFFMYSK (330 aa)). N-linked (GlcNAc...) asparagine glycosylation is present at Asn146. The Zn(2+) site is built by His161 and Asp173. The Proton acceptor role is filled by Glu207. Zn(2+) contacts are provided by Glu208 and Glu234. Asn291 carries N-linked (GlcNAc...) asparagine glycosylation. His307 provides a ligand contact to Zn(2+). The chain crosses the membrane as a helical span at residues 366 to 384 (LTSKILNTLVGGLGILLTL). Topologically, residues 385 to 392 (RGSEGSFT) are cytoplasmic. The helical transmembrane segment at 393–413 (VALIAQVISIAGIFVIPNIWA) threads the bilayer. Topologically, residues 414 to 431 (YILGNVLDCGMSWFRNEY) are lumenal. A helical membrane pass occupies residues 432–452 (WPLFIYLPAIFASLFFTESLF). Topologically, residues 453–463 (KRSEHLALRAT) are cytoplasmic. Residues 464-484 (IFIFSLLTFIPLPSAYLFTII) form a helical membrane-spanning segment. Position 485 (Asp485) is a topological domain, lumenal. A helical transmembrane segment spans residues 486 to 506 (FFMVFALFLNDKILAKPGTVH). The Cytoplasmic segment spans residues 507–514 (PLTYFIGS). The helical transmembrane segment at 515-535 (IGAMTVGFESAINLLEIFVPL) threads the bilayer. Over 536–547 (TGRIGTDKVADN) the chain is Lumenal. The helical transmembrane segment at 548–568 (VVATVCVCGFNIYFPLMSPWI) threads the bilayer. Residues 569 to 575 (QRFRSRC) are Cytoplasmic-facing. A helical transmembrane segment spans residues 576-596 (CFRLGLLFSIFVVGFSSFILA). Residues 597–822 (KQDTYYDSLH…GVVSGNFKLE (226 aa)) lie on the Lumenal side of the membrane. 4 N-linked (GlcNAc...) asparagine glycosylation sites follow: Asn617, Asn682, Asn706, and Asn758.

The protein belongs to the peptidase M28 family. M28B subfamily. Requires Zn(2+) as cofactor.

Its subcellular location is the endoplasmic reticulum membrane. This Schizosaccharomyces pombe (strain 972 / ATCC 24843) (Fission yeast) protein is Putative endoplasmic reticulum metallopeptidase 1.